A 243-amino-acid chain; its full sequence is DNA repair protein RecO (243 aa).

It belongs to the RecO family.

Involved in DNA repair and RecF pathway recombination. The chain is DNA repair protein RecO from Caulobacter sp. (strain K31).